A 517-amino-acid chain; its full sequence is Bifunctional purine biosynthesis protein PurH (517 aa).

The region spanning 1–145 (MSPLALVSVS…KNHKDVSVLV (145 aa)) is the MGS-like domain.

Belongs to the PurH family.

It catalyses the reaction (6R)-10-formyltetrahydrofolate + 5-amino-1-(5-phospho-beta-D-ribosyl)imidazole-4-carboxamide = 5-formamido-1-(5-phospho-D-ribosyl)imidazole-4-carboxamide + (6S)-5,6,7,8-tetrahydrofolate. The enzyme catalyses IMP + H2O = 5-formamido-1-(5-phospho-D-ribosyl)imidazole-4-carboxamide. Its pathway is purine metabolism; IMP biosynthesis via de novo pathway; 5-formamido-1-(5-phospho-D-ribosyl)imidazole-4-carboxamide from 5-amino-1-(5-phospho-D-ribosyl)imidazole-4-carboxamide (10-formyl THF route): step 1/1. It functions in the pathway purine metabolism; IMP biosynthesis via de novo pathway; IMP from 5-formamido-1-(5-phospho-D-ribosyl)imidazole-4-carboxamide: step 1/1. This chain is Bifunctional purine biosynthesis protein PurH, found in Prochlorococcus marinus (strain AS9601).